The primary structure comprises 572 residues: Transmembrane glycoprotein NMB (572 aa).

The N-terminal stretch at 1-22 is a signal peptide; the sequence is MECLYYFLGFLLLAARLPLDAA. Over 23 to 498 the chain is Extracellular; sequence KRFHDVLGNE…DPASPLRMAN (476 aa). A Cell attachment site motif is present at residues 64–66; sequence RGD. N-linked (GlcNAc...) asparagine glycans are attached at residues Asn-93, Asn-134, Asn-146, Asn-200, Asn-249, Asn-275, Asn-296, Asn-300, Asn-306, and Asn-312. The PKD domain maps to 240–327; that stretch reads VTMFQKNDRN…AAPGPCPPPP (88 aa). Positions 320–362 are disordered; it reads PGPCPPPPPPPRPSKPTPSLATTLKSYDSNTPGPAGDNPLELS. Pro residues predominate over residues 321–335; that stretch reads GPCPPPPPPPRPSKP. Residues 338–351 are compositionally biased toward polar residues; sequence SLATTLKSYDSNTP. 2 N-linked (GlcNAc...) asparagine glycosylation sites follow: Asn-459 and Asn-467. Residues 499–519 traverse the membrane as a helical segment; the sequence is SALISVGCLAIFVTVISLLVY. The Cytoplasmic portion of the chain corresponds to 520-572; it reads KKHKEYNPIENSPGNVVRSKGLSVFLNRAKAVFFPGNQEKDPLLKNQEFKGVS. Ser-542 carries the post-translational modification Phosphoserine.

The protein belongs to the PMEL/NMB family. As to expression, widely expressed, but very low expression, if any, in the brain. Expressed in the epidermis with higher levels in melanocytes compared with keratinocytes and Langerhans cells (at protein level). Expressed in peripheral blood, but not bone marrow mononuclear cells. Expressed in tissue macrophages, including liver Kuppfer cells and lung alveolar macrophages, in podocytes and in some cells of the ciliary body of the eye (at protein level). May be overexpressed in various cancers, including melanoma and glioblastoma multiforme.

The protein localises to the cell membrane. It is found in the melanosome membrane. Its subcellular location is the early endosome membrane. Its function is as follows. Could be a melanogenic enzyme. The polypeptide is Transmembrane glycoprotein NMB (GPNMB) (Homo sapiens (Human)).